The sequence spans 407 residues: UDP-N-acetyl-D-mannosamine dehydrogenase (407 aa).

The protein belongs to the UDP-glucose/GDP-mannose dehydrogenase family.

The enzyme catalyses UDP-N-acetyl-alpha-D-mannosamine + 2 NAD(+) + H2O = UDP-N-acetyl-alpha-D-mannosaminouronate + 2 NADH + 3 H(+). Its pathway is capsule biogenesis; capsule polysaccharide biosynthesis. In terms of biological role, dehydrogenase involved in the biosynthesis of capsular polysaccharides. Catalyzes the NAD(+)-dependent oxidation of UDP-N-acetyl-D-mannosamine (UDP-ManNAc) to UDP-N-acetyl-D-mannosaminuronic acid (UDP-ManNAcA). In Campylobacter jejuni, this protein is UDP-N-acetyl-D-mannosamine dehydrogenase.